Here is a 496-residue protein sequence, read N- to C-terminus: MAAAAAPRGWQRGEPRALSRAVKLLQRLEEQCRDPRMVTGPPSLRDLLPRTAQLLGEVAKARREAREDPEGPGGADDFLAIYLANLEVKGRQVAELLPPRGKKDVNQDVFREGSRFRRQLAKLALIFSHMHAELSALFPAGKYCGHLYQLTKGSAHIFWRQNCGVRCVLPWAEFQSLLCACHPVEPGPTMQALRSTLDLTCNGHVSVFEFDVFTRLFQPWPTLLRNWQLLAVNHPGYMAFLTYDEVQTRLQAYRDKPGSYIFRPSCTRLGQWAIGYVSSDGSILQTIPLNKPLLQVLLKGQKDGIFLFPDGKKHNPDLTELCRVEPYQRIQVSEEQLLLYQAMNSTFQLCKICAERDKDVRIEPCGHLLCSCCLAAWQDSDSQTCPFCRCEIKGREAVSICQAQERPTEVRTAADGSRDNCHQEAAEQKLGPVIPSAPSLLPEDQFPQGPQDKGWLTLAPLALPRLRPPLPLPKMASVLWEVTSRPRAREEATESS.

The interval 7–144 is 4H; the sequence is PRGWQRGEPR…SALFPAGKYC (138 aa). The region spanning 7-320 is the Cbl-PTB domain; sequence PRGWQRGEPR…GKKHNPDLTE (314 aa). An EF-hand-like region spans residues 145-217; it reads GHLYQLTKGS…FEFDVFTRLF (73 aa). Ca(2+) is bound by residues D198, T200, N202, and E209. An SH2-like region spans residues 218–320; that stretch reads QPWPTLLRNW…GKKHNPDLTE (103 aa). R263 is a binding site for 4-O-phospho-L-tyrosine. The segment at 321–349 is linker; sequence LCRVEPYQRIQVSEEQLLLYQAMNSTFQL. A Phosphotyrosine; by SRC modification is found at Y340. The segment at 350 to 389 adopts an RING-type zinc-finger fold; sequence CKICAERDKDVRIEPCGHLLCSCCLAAWQDSDSQTCPFCR. Positions 350-494 are interaction with RET; it reads CKICAERDKD…RPRAREEATE (145 aa). The disordered stretch occupies residues 432 to 453; sequence PVIPSAPSLLPEDQFPQGPQDK.

In terms of assembly, interacts with Ubiquitin-conjugating enzyme E2 UBE2D2 and UBE2D3. Isoform 1 interacts with EGFR (tyrosine phosphorylated). Interacts with the SH3 domain proteins LYN and CRK. Interacts (via RING-type zinc finger) with TGFB1I1 (via LIM zinc-binding domain 2); the interaction is direct and enhances the E3 activity. Interacts directly with RET (inactive) and CD2AP; dissociates from RET upon RET activation by GDNF which also increases the interaction with CD2AP suggesting dissociation as CBLC:CD2AP complex. Interacts with SRC; the interaction is enhanced when SRC is phosphorylated at 'Tyr-419'. Phosphorylated on tyrosines by EGFR. In terms of processing, phosphorylated on multiple tyrosine residues by SRC. Isoform 1, but not isoform 2, is phosphorylated on tyrosines by EGFR. Post-translationally, autoubiquitinated, when phosphorylated at Tyr-340. As to expression, widely expressed in tissues, where the expression is restricted to epithelial cells (at protein level).

The enzyme catalyses S-ubiquitinyl-[E2 ubiquitin-conjugating enzyme]-L-cysteine + [acceptor protein]-L-lysine = [E2 ubiquitin-conjugating enzyme]-L-cysteine + N(6)-ubiquitinyl-[acceptor protein]-L-lysine.. Its activity is regulated as follows. Phosphorylation at Tyr-340 is necessary and sufficient for the activation of E3 activity. Its function is as follows. Acts as an E3 ubiquitin-protein ligase, which accepts ubiquitin from specific E2 ubiquitin-conjugating enzymes, and then transfers it to substrates promoting their degradation by the proteasome. Functionally coupled with the E2 ubiquitin-protein ligases UB2D1, UB2D2 and UB2D3. Regulator of EGFR mediated signal transduction; upon EGF activation, ubiquitinates EGFR. Isoform 1, but not isoform 2, inhibits EGF stimulated MAPK1 activation. Promotes ubiquitination of SRC phosphorylated at 'Tyr-424', has the highest ubiquitin ligase activity among CBL family proteins. In collaboration with CD2AP may act as regulatory checkpoint for Ret signaling by modulating the rate of RET degradation after ligand activation; CD2AP converts it from an inhibitor to a promoter of RET degradation; the function limits the potency of GDNF on neuronal survival. This is E3 ubiquitin-protein ligase CBL-C (Cblc) from Mus musculus (Mouse).